Consider the following 206-residue polypeptide: Potassium-transporting ATPase KdpC subunit (206 aa).

Residues valine 14 to isoleucine 34 form a helical membrane-spanning segment.

Belongs to the KdpC family. In terms of assembly, the system is composed of three essential subunits: KdpA, KdpB and KdpC.

The protein localises to the cell inner membrane. Its function is as follows. Part of the high-affinity ATP-driven potassium transport (or Kdp) system, which catalyzes the hydrolysis of ATP coupled with the electrogenic transport of potassium into the cytoplasm. This subunit acts as a catalytic chaperone that increases the ATP-binding affinity of the ATP-hydrolyzing subunit KdpB by the formation of a transient KdpB/KdpC/ATP ternary complex. The sequence is that of Potassium-transporting ATPase KdpC subunit from Xanthomonas axonopodis pv. citri (strain 306).